Reading from the N-terminus, the 672-residue chain is tRNA(Met) cytidine acetyltransferase TmcA (672 aa).

Residues Q180, 202–211 (GRGKSALAGQ), and R319 contribute to the ATP site. The N-acetyltransferase domain occupies 349-531 (IEISAFYQQA…SGCYTAMALL (183 aa)). Residues 461-463 (IAV), 468-474 (QREGIGQ), and R506 each bind acetyl-CoA.

Belongs to the RNA cytidine acetyltransferase family. TmcA subfamily.

It localises to the cytoplasm. The catalysed reaction is cytidine(34) in elongator tRNA(Met) + acetyl-CoA + ATP + H2O = N(4)-acetylcytidine(34) in elongator tRNA(Met) + ADP + phosphate + CoA + H(+). Catalyzes the formation of N(4)-acetylcytidine (ac(4)C) at the wobble position of tRNA(Met), by using acetyl-CoA as an acetyl donor and ATP (or GTP). This chain is tRNA(Met) cytidine acetyltransferase TmcA, found in Salmonella typhimurium (strain LT2 / SGSC1412 / ATCC 700720).